The sequence spans 353 residues: MDLEASLLPTGPNTSNTSDGPDNLTSAGSPPRSGSVSYINIIMPSVFGTICLLGIIGNSMVIFAVVKKSKLHWCNNVPDIFIINLSVVDLLFLLGMPFMIHQLMGNGVWHFGETMCTLITAMDANSQFTSTYILTAMAIDRYLATVHPISSTKFRKPSVATLVICLLWALSFISITPVWLYARLIPFPGGAVGCGIRLPNPDTDLYWFTLYQFFLAFALPFVVITAAYVRILQRMTSSVAPASQRSIRLRTKRVTRTAIAICLVFFVCWAPYYVLQLTQLSISRPTLTFVYLYNAAISLGYANSCLNPFVYIVLCETFRKRLVLSVKPAAQGQLRAVSNAQTADEERTESKGT.

A disordered region spans residues 1–31 (MDLEASLLPTGPNTSNTSDGPDNLTSAGSPP). Residues 1 to 45 (MDLEASLLPTGPNTSNTSDGPDNLTSAGSPPRSGSVSYINIIMPS) lie on the Extracellular side of the membrane. Positions 11-31 (GPNTSNTSDGPDNLTSAGSPP) are enriched in polar residues. Asparagine 13, asparagine 16, and asparagine 23 each carry an N-linked (GlcNAc...) asparagine glycan. The helical transmembrane segment at 46–66 (VFGTICLLGIIGNSMVIFAVV) threads the bilayer. Topologically, residues 67–79 (KKSKLHWCNNVPD) are cytoplasmic. Residues 80–100 (IFIINLSVVDLLFLLGMPFMI) traverse the membrane as a helical segment. The Extracellular portion of the chain corresponds to 101–118 (HQLMGNGVWHFGETMCTL). Residues cysteine 116 and cysteine 194 are joined by a disulfide bond. A helical transmembrane segment spans residues 119–139 (ITAMDANSQFTSTYILTAMAI). Over 140–161 (DRYLATVHPISSTKFRKPSVAT) the chain is Cytoplasmic. Residues 162-182 (LVICLLWALSFISITPVWLYA) traverse the membrane as a helical segment. The Extracellular segment spans residues 183–204 (RLIPFPGGAVGCGIRLPNPDTD). The helical transmembrane segment at 205–225 (LYWFTLYQFFLAFALPFVVIT) threads the bilayer. Over 226–257 (AAYVRILQRMTSSVAPASQRSIRLRTKRVTRT) the chain is Cytoplasmic. A helical membrane pass occupies residues 258 to 278 (AIAICLVFFVCWAPYYVLQLT). Residues 279–294 (QLSISRPTLTFVYLYN) are Extracellular-facing. Residues 295–315 (AAISLGYANSCLNPFVYIVLC) traverse the membrane as a helical segment. Over 316-353 (ETFRKRLVLSVKPAAQGQLRAVSNAQTADEERTESKGT) the chain is Cytoplasmic.

It belongs to the G-protein coupled receptor 1 family. As to quaternary structure, interacts with NCDN.

It is found in the cell membrane. In terms of biological role, receptor for melanin-concentrating hormone, coupled to both G proteins that inhibit adenylyl cyclase and G proteins that activate phosphoinositide hydrolysis. The sequence is that of Melanin-concentrating hormone receptor 1 from Macaca mulatta (Rhesus macaque).